A 287-amino-acid polypeptide reads, in one-letter code: SPX domain-containing protein 2 (287 aa).

Positions 1–162 (MKFGKSLSNQ…GALIRLPFIQ (162 aa)) constitute an SPX domain. Residues 36 to 50 (EPRSVENRPNKRSRS) show a composition bias toward basic and acidic residues. 2 disordered regions span residues 36–61 (EPRSVENRPNKRSRSDSNSVDTDPTV) and 194–213 (KSRNLDEEGEPTTSGMVKTG).

The protein localises to the nucleus. In terms of biological role, may inhibit PHR1 DNA-binding activity in a Pi-dependent manner. This is SPX domain-containing protein 2 from Arabidopsis thaliana (Mouse-ear cress).